Reading from the N-terminus, the 1138-residue chain is Trafficking protein particle complex subunit 9 (1138 aa).

Ser557 and Ser944 each carry phosphoserine.

It belongs to the NIBP family. In terms of assembly, component of the multisubunit TRAPP (transport protein particle) complex, which includes at least TRAPPC2, TRAPPC2L, TRAPPC3, TRAPPC3L, TRAPPC4, TRAPPC5, TRAPPC8, TRAPPC9, TRAPPC10, TRAPPC11 and TRAPPC12. Directly interacts with IKBKB and MAP3K14.

It is found in the golgi apparatus. The protein resides in the cis-Golgi network. It localises to the endoplasmic reticulum. The protein localises to the cytoplasm. In terms of biological role, functions as an activator of NF-kappa-B through increased phosphorylation of the IKK complex. May function in neuronal cells differentiation. May play a role in vesicular transport from endoplasmic reticulum to Golgi. The polypeptide is Trafficking protein particle complex subunit 9 (TRAPPC9) (Bos taurus (Bovine)).